We begin with the raw amino-acid sequence, 559 residues long: GTP diphosphokinase CRSH2, chloroplastic (559 aa).

The N-terminal 37 residues, 1–37 (MASAGGEVVVVDPAAAAVAPDVEHHAPAPRLTPAGSG), are a transit peptide targeting the chloroplast. The 101-residue stretch at 87-187 (SLARALIVAA…LELAIRLDAM (101 aa)) folds into the HD domain. 2 consecutive EF-hand domains span residues 449–484 (ASAGNIERAFRLLDKNGDGRISMEELTELMEDLGAG) and 486–518 (KDAEELMRLLDDNNDGSLSSDEFALFQKRVELK). Ca(2+) contacts are provided by Asp-462, Asn-464, Asp-466, Arg-468, Glu-473, Asp-496, Asn-498, Asp-500, Ser-502, and Glu-507.

Belongs to the RelA/SpoT family. As to expression, expressed in shoots.

The protein localises to the plastid. It is found in the chloroplast. It carries out the reaction GTP + ATP = guanosine 3'-diphosphate 5'-triphosphate + AMP. With respect to regulation, activated by calcium. Possesses calcium-dependent ppGpp (guanosine 3'-diphosphate 5'-diphosphate) synthetase activity in vitro and is able to functionally complement E.coli relA mutants. May be involved in a rapid plant ppGpp-mediated response to pathogens and other stresses. The chain is GTP diphosphokinase CRSH2, chloroplastic from Oryza sativa subsp. japonica (Rice).